The following is a 701-amino-acid chain: Lutropin-choriogonadotropic hormone receptor (701 aa).

A signal peptide spans 1–26 (MGRPSLALRLLLALLLLPPPAPLLWA). The Extracellular portion of the chain corresponds to 27–365 (LRPAPCPEPC…EDIMGYNFLR (339 aa)). Asn101 carries an N-linked (GlcNAc...) asparagine glycan. LRR repeat units lie at residues 124-149 (LPRLKYLSICNTGIHKLPDVTKIFSS), 151-173 (FNFILEICDNLHITTIPRNAFQG), 174-198 (MNNESITLKLYGNGFEEIQSHAFNG), 200-222 (TLISLELKENARLEKMHNDAFRG), 223-246 (ATGPSILDISSTKLQALPTYGLES), and 250-271 (LIATSSYSLKKLPSREKFTNLL). 2 N-linked (GlcNAc...) asparagine glycosylation sites follow: Asn176 and Asn197. Residues Asn293, Asn301, and Asn315 are each glycosylated (N-linked (GlcNAc...) asparagine). The residue at position 333 (Tyr333) is a Sulfotyrosine. The helical transmembrane segment at 366–387 (VLIWLINILAITGNVTVLFVLL) threads the bilayer. Residues 388-397 (TSRYKLTVPR) are Cytoplasmic-facing. The chain crosses the membrane as a helical span at residues 398–418 (FLMCNLSFADFCMGLYLLLIA). At 419–441 (SVDAQTKGQYYNHAIDWQTGSGC) the chain is on the extracellular side. A disulfide bridge links Cys441 with Cys516. The helical transmembrane segment at 442-464 (SAAGFFTVFASELSVYTLTVITL) threads the bilayer. Over 465–484 (ERWHTITYAIQLDQKLRLKH) the chain is Cytoplasmic. A helical membrane pass occupies residues 485–507 (AIPVMLGGWLFSTLIAVLPLVGV). Residues 508–527 (SNYMKVSICLPMDVESTLSQ) lie on the Extracellular side of the membrane. The helical transmembrane segment at 528-551 (VYILTILILNVMAFIIICACYIKI) threads the bilayer. The Cytoplasmic portion of the chain corresponds to 552–572 (YFAVQNPELMATNKDTKIAKK). The chain crosses the membrane as a helical span at residues 573-596 (MAVLIFTDFTCMAPISFFAISAAF). Residues 597–607 (KVPLITVTNSK) lie on the Extracellular side of the membrane. Residues 608–629 (VLLVLFYPVNSCANPFLYAIFT) traverse the membrane as a helical segment. Residues 630 to 701 (KAFQRDFFLL…VLDKTCYKEC (72 aa)) are Cytoplasmic-facing. S-palmitoyl cysteine attachment occurs at residues Cys645 and Cys646.

The protein belongs to the G-protein coupled receptor 1 family. FSH/LSH/TSH subfamily. Sulfated.

The protein localises to the cell membrane. Its function is as follows. Receptor for lutropin-choriogonadotropic hormone. The activity of this receptor is mediated by G proteins which activate adenylate cyclase. This is Lutropin-choriogonadotropic hormone receptor (LHCGR) from Bos taurus (Bovine).